A 466-amino-acid chain; its full sequence is Glutamate--tRNA ligase 2 (466 aa).

A 'HIGH' region motif is present at residues 11–21 (PSPTGFLHIGG). Positions 239 to 243 (KLSKR) match the 'KMSKS' region motif. Lys-242 provides a ligand contact to ATP.

The protein belongs to the class-I aminoacyl-tRNA synthetase family. Glutamate--tRNA ligase type 1 subfamily. In terms of assembly, monomer.

It is found in the cytoplasm. The enzyme catalyses tRNA(Glu) + L-glutamate + ATP = L-glutamyl-tRNA(Glu) + AMP + diphosphate. In terms of biological role, catalyzes the attachment of glutamate to tRNA(Glu) in a two-step reaction: glutamate is first activated by ATP to form Glu-AMP and then transferred to the acceptor end of tRNA(Glu). This Roseobacter denitrificans (strain ATCC 33942 / OCh 114) (Erythrobacter sp. (strain OCh 114)) protein is Glutamate--tRNA ligase 2.